Here is a 675-residue protein sequence, read N- to C-terminus: Probable metal-nicotianamine transporter YSL16 (675 aa).

Gly residues predominate over residues 1 to 11; it reads MDRHALGGGGA. The segment at 1–20 is disordered; the sequence is MDRHALGGGGALEIEKTPEA. A run of 14 helical transmembrane segments spans residues 50–70, 73–93, 118–138, 162–182, 231–251, 283–303, 329–349, 393–413, 421–441, 453–473, 507–527, 567–587, 605–625, and 633–653; these read GMVA…KLSL, GLIP…LRGW, CAVA…LLGL, GIGW…LTLL, ISFL…CGFL, LVNL…WPLI, FICI…VIVV, MAYT…PVMF, VIIA…GTGL, IALF…AGLV, VGQV…FFLF, LQLC…RDFL, FLVG…VFLW, and AALL…IWTF.

This sequence belongs to the YSL (TC 2.A.67.2) family. As to expression, expressed in roots.

It is found in the membrane. In terms of biological role, may be involved in the transport of nicotianamine-chelated metals. The chain is Probable metal-nicotianamine transporter YSL16 (YSL16) from Oryza sativa subsp. japonica (Rice).